Consider the following 198-residue polypeptide: Glycerol-3-phosphate acyltransferase (198 aa).

5 helical membrane-spanning segments follow: residues 6-26 (FLPVALVIGYLLGSIPFGLVL), 56-78 (LAAGTLLLDALKGTVAVVIAGYI), 83-101 (AAMAAGLGAFLGHLFPVWL), 113-133 (IGILLGLFWPAAVVFCLLWLA), and 155-175 (FLWWFGHLALSALFAVLTLLL).

This sequence belongs to the PlsY family. As to quaternary structure, probably interacts with PlsX.

The protein localises to the cell inner membrane. The catalysed reaction is an acyl phosphate + sn-glycerol 3-phosphate = a 1-acyl-sn-glycero-3-phosphate + phosphate. Its pathway is lipid metabolism; phospholipid metabolism. Catalyzes the transfer of an acyl group from acyl-phosphate (acyl-PO(4)) to glycerol-3-phosphate (G3P) to form lysophosphatidic acid (LPA). This enzyme utilizes acyl-phosphate as fatty acyl donor, but not acyl-CoA or acyl-ACP. This chain is Glycerol-3-phosphate acyltransferase, found in Bradyrhizobium diazoefficiens (strain JCM 10833 / BCRC 13528 / IAM 13628 / NBRC 14792 / USDA 110).